We begin with the raw amino-acid sequence, 129 residues long: Trefoil factor 2 (129 aa).

A signal peptide spans 1–23 (MGRRDAQLLAALLVLGLCALAGS). 2 P-type domains span residues 29 to 73 (CQCS…FHPL) and 79 to 122 (DQCV…FFPK). 7 cysteine pairs are disulfide-bonded: Cys-29–Cys-127, Cys-31–Cys-58, Cys-42–Cys-57, Cys-52–Cys-69, Cys-81–Cys-107, Cys-91–Cys-106, and Cys-101–Cys-118.

Stomach.

It is found in the secreted. Inhibits gastrointestinal motility and gastric acid secretion. Could function as a structural component of gastric mucus, possibly by stabilizing glycoproteins in the mucus gel through interactions with carbohydrate side chains. The polypeptide is Trefoil factor 2 (TFF2) (Homo sapiens (Human)).